The primary structure comprises 362 residues: Histidinol-phosphate aminotransferase (362 aa).

N6-(pyridoxal phosphate)lysine is present on K220.

It belongs to the class-II pyridoxal-phosphate-dependent aminotransferase family. Histidinol-phosphate aminotransferase subfamily. Homodimer. The cofactor is pyridoxal 5'-phosphate.

The catalysed reaction is L-histidinol phosphate + 2-oxoglutarate = 3-(imidazol-4-yl)-2-oxopropyl phosphate + L-glutamate. It functions in the pathway amino-acid biosynthesis; L-histidine biosynthesis; L-histidine from 5-phospho-alpha-D-ribose 1-diphosphate: step 7/9. The protein is Histidinol-phosphate aminotransferase of Rhodospirillum centenum (strain ATCC 51521 / SW).